A 262-amino-acid polypeptide reads, in one-letter code: MSQPAELSREENVYMAKLAEQAERYEEMVEFMEKVAKTVDSEELTVEERNLLSVAYKNVIGARRASWRIISSIEQKEESRGNEDRCTLIKEYRGKIETELSKICDGILKLLDSHLVPSSTAPESKVFYLKMKGDYYRYLAEFKTGAERKDAAENTMVAYKAAQDIALAELPPTHPIRLGLALNFSVFYYEILNSPDRACNLAKQAFDEAISELDTLSEESYKDSTLIMQLLRDNLTLWTSDISEDAAEEIKEAPKGESGDGQ.

The protein belongs to the 14-3-3 family. In terms of tissue distribution, ubiquitous.

Its subcellular location is the cytoplasm. The protein localises to the nucleus. Functionally, is associated with a DNA binding complex that binds to the G box, a well-characterized cis-acting DNA regulatory element found in plant genes. This Oryza sativa subsp. japonica (Rice) protein is 14-3-3-like protein GF14-E (GF14E).